A 251-amino-acid polypeptide reads, in one-letter code: Arginine and glutamate-rich protein 1-A (251 aa).

A compositionally biased stretch (basic residues) spans 1-48 (MGRSRSRSSSRSKHSKHSRKRSRSKSKSKKRSRSKEPKRNRRSRSRSG). A necessary and sufficient for RNA binding region spans residues 1–53 (MGRSRSRSSSRSKHSKHSRKRSRSKSKSKKRSRSKEPKRNRRSRSRSGSRRDR). Disordered stretches follow at residues 1–92 (MGRS…ERQR) and 215–251 (RMKL…KATE). Basic and acidic residues-rich tracts occupy residues 49–63 (SRRD…RTDM), 71–92 (RNND…ERQR), and 215–231 (RMKL…EEQK). Positions 54-251 (GGSPPDRTDM…RLSFSLKATE (198 aa)) are necessary and sufficient for transcriptional regulation.

It belongs to the ARGLU1 family.

Its subcellular location is the nucleus. It localises to the nucleus speckle. It is found in the chromosome. Its function is as follows. Dual function regulator of gene expression; regulator of transcription and modulator of alternative splicing. General coactivator of nuclear receptor-induced gene expression. The protein is Arginine and glutamate-rich protein 1-A (arglu1a) of Danio rerio (Zebrafish).